The primary structure comprises 362 residues: Type-2 angiotensin II receptor (362 aa).

Residues 1-44 are Extracellular-facing; it reads MKANFSLATISKNITSSLHVGFVNISSNESTFNCSHKPSDKHLD. N-linked (GlcNAc...) asparagine glycans are attached at residues Asn4, Asn13, Asn24, Asn28, and Asn33. Cystine bridges form between Cys34/Cys289 and Cys116/Cys194. A helical membrane pass occupies residues 45–69; it reads AIPVLYYIIFGVGFLVNTIVVTLFC. At 70–79 the chain is on the cytoplasmic side; it reads CQKGPKKVSS. The chain crosses the membrane as a helical span at residues 80–103; the sequence is IYIFNLAVADLLLLATLPLWATYY. The angiotensin II site is built by Tyr102 and Tyr103. The Extracellular portion of the chain corresponds to 104 to 113; the sequence is SHRYDWIFGP. Residues 114–139 form a helical membrane-spanning segment; it reads VMCKVFGSFLTLNMFASIFFITCMSV. The Cytoplasmic portion of the chain corresponds to 140 to 158; the sequence is DRYQSVIYPFLSQRRNPWQ. A helical transmembrane segment spans residues 159 to 180; the sequence is ASYIVPLVWCMACLSSLPTFYF. Positions 181, 203, and 214 each coordinate angiotensin II. Topologically, residues 181–205 are extracellular; the sequence is RDVRTIEYLGVNACIMAFPPEKYAQ. Residues 206-231 traverse the membrane as a helical segment; that stretch reads WSAGIALMKNILGFIIPLIFIATCYF. The Cytoplasmic segment spans residues 232-256; that stretch reads GIRKHLLKTNSYGKNRITRDQVLKM. Residues 257–280 traverse the membrane as a helical segment; the sequence is AAAVVLAFIICWLPFHVLTFLDAL. An angiotensin II-binding site is contributed by Asp278. At 281-293 the chain is on the extracellular side; that stretch reads AWMGVINSCEVIA. A helical transmembrane segment spans residues 294–319; sequence VIDLALPFAILLGFTNSCINPFLYCF. Asp296 contacts angiotensin II. Residues 320 to 362 are Cytoplasmic-facing; sequence VGNRFQQKLRRVFRVPITWLQGKRENGSCGKSSSFREMETFVS. Residues 323–332 are helix VIII; that stretch reads RFQQKLRRVF.

This sequence belongs to the G-protein coupled receptor 1 family. As to quaternary structure, interacts with MTUS1.

It localises to the cell membrane. Functionally, receptor for angiotensin II, a vasoconstricting peptide. Signals primarily via a non-canonical G-protein- and beta-arrestin independent pathways. Cooperates with MTUS1 to inhibit ERK2 activation and cell proliferation. The chain is Type-2 angiotensin II receptor (AGTR2) from Ovis aries (Sheep).